A 120-amino-acid chain; its full sequence is Ribosome-binding factor A (120 aa).

It belongs to the RbfA family. As to quaternary structure, monomer. Binds 30S ribosomal subunits, but not 50S ribosomal subunits or 70S ribosomes.

Its subcellular location is the cytoplasm. In terms of biological role, one of several proteins that assist in the late maturation steps of the functional core of the 30S ribosomal subunit. Associates with free 30S ribosomal subunits (but not with 30S subunits that are part of 70S ribosomes or polysomes). Required for efficient processing of 16S rRNA. May interact with the 5'-terminal helix region of 16S rRNA. The chain is Ribosome-binding factor A from Fusobacterium nucleatum subsp. nucleatum (strain ATCC 25586 / DSM 15643 / BCRC 10681 / CIP 101130 / JCM 8532 / KCTC 2640 / LMG 13131 / VPI 4355).